The following is a 579-amino-acid chain: MKKYWHKLSFLQKNVLLTVLVILTLVGTMGALSFNMFQNSMMSIFERHSFETGDTVLHKLDEEIVRDVTKDPVAQREKREKLTEKLDEATEELNSVGQTYIVGAKKNEKGELLIVDLSTDLANVVEVRPGEYYKQPDLWMEAYDKVMSTKKANMTVVYEDLLGTWVTILEPIKDGEGNIVAIVAADVDASIVPSTKEKFIIQGLMFICISVLIATVIQFLIVRNALAPLRDLREGLRRVGEGDLNIKLEERSDDIGIINSYFNNTIEKFKGIIDKVKQTAEQVSSSSQELSVSTKENSMAVQEIVSSMVELRAGAQLQETSVPQYLGIVYEVEDKMEEITNAAKQMEKVSEGIEHHSVKGNGVTKQAINQMNIIQNAVQDLSSIIYSLEVRSKEISDIVTVITSISNQTNSLALHATIEASRAEETGEGFAVVADEVRKLAEQMEASAKDIANLIGETQAGTEEAVVSIRKASKEVESGMKLVEMNGAFFEEISKSAQSVTNQVRVVSSNSSDILQNSQNIVRVVNELSLIANTYTNSSSNVEESMKEQEMSVQDIAELASSLSWLSQELQELIGEFKS.

Topologically, residues 1-13 (MKKYWHKLSFLQK) are cytoplasmic. The helical transmembrane segment at 14-34 (NVLLTVLVILTLVGTMGALSF) threads the bilayer. The Extracellular portion of the chain corresponds to 35–198 (NMFQNSMMSI…ASIVPSTKEK (164 aa)). A helical membrane pass occupies residues 199–219 (FIIQGLMFICISVLIATVIQF). Over 220–579 (LIVRNALAPL…LQELIGEFKS (360 aa)) the chain is Cytoplasmic. The 52-residue stretch at 223–274 (RNALAPLRDLREGLRRVGEGDLNIKLEERSDDIGIINSYFNNTIEKFKGIID) folds into the HAMP domain. A Glutamate methyl ester (Glu) modification is found at Glu-289. One can recognise a Methyl-accepting transducer domain in the interval 293–529 (STKENSMAVQ…NIVRVVNELS (237 aa)). Glu-548 is modified (glutamate methyl ester (Glu)).

This sequence belongs to the methyl-accepting chemotaxis (MCP) protein family.

It localises to the cell membrane. Its function is as follows. Chemotactic-signal transducers respond to changes in the concentration of attractants and repellents in the environment, transduce a signal from the outside to the inside of the cell, and facilitate sensory adaptation through the variation of the level of methylation. The polypeptide is Probable methyl-accepting chemotaxis protein BT9727_0355 (Bacillus thuringiensis subsp. konkukian (strain 97-27)).